We begin with the raw amino-acid sequence, 94 residues long: Acylphosphatase (94 aa).

One can recognise an Acylphosphatase-like domain in the interval R3–Y90. Residues R18 and N36 contribute to the active site.

Belongs to the acylphosphatase family.

The catalysed reaction is an acyl phosphate + H2O = a carboxylate + phosphate + H(+). This chain is Acylphosphatase (acyP), found in Geobacillus kaustophilus (strain HTA426).